Consider the following 405-residue polypeptide: Tryptophan synthase beta chain (405 aa).

K96 is modified (N6-(pyridoxal phosphate)lysine).

Belongs to the TrpB family. In terms of assembly, tetramer of two alpha and two beta chains. The cofactor is pyridoxal 5'-phosphate.

It catalyses the reaction (1S,2R)-1-C-(indol-3-yl)glycerol 3-phosphate + L-serine = D-glyceraldehyde 3-phosphate + L-tryptophan + H2O. The protein operates within amino-acid biosynthesis; L-tryptophan biosynthesis; L-tryptophan from chorismate: step 5/5. In terms of biological role, the beta subunit is responsible for the synthesis of L-tryptophan from indole and L-serine. In Clostridium botulinum (strain Eklund 17B / Type B), this protein is Tryptophan synthase beta chain.